The sequence spans 273 residues: TIP41-like protein (273 aa).

The protein belongs to the TIP41 family.

Its subcellular location is the cytoplasm. Its function is as follows. May be a regulator of serine/threonine-protein phosphatases 2A (PP2A) and 4 (PP4). The sequence is that of TIP41-like protein (tiprl) from Xenopus tropicalis (Western clawed frog).